The primary structure comprises 1314 residues: AT-rich interactive domain-containing protein 4B (1314 aa).

Disordered regions lie at residues Leu-123–Thr-169 and Lys-266–Pro-306. Ser-276, Ser-295, and Ser-296 each carry phosphoserine. Positions Glu-277 to Phe-305 are enriched in acidic residues. An ARID domain is found at Pro-306–Arg-398. Glycyl lysine isopeptide (Lys-Gly) (interchain with G-Cter in SUMO2) cross-links involve residues Lys-428 and Lys-461. Positions Asn-439–Ile-464 are enriched in basic and acidic residues. 5 disordered regions span residues Asn-439–Val-577, Ile-635–Met-678, Ala-709–Arg-888, Lys-943–Lys-1215, and Val-1256–Ala-1290. The residue at position 482 (Ser-482) is a Phosphoserine. Residues Lys-486–Glu-511 show a composition bias toward basic and acidic residues. Acidic residues predominate over residues Asn-531–Glu-567. Residues Gly-572 to Ile-624 form the Tudor-knot domain. Positions Asn-643 to Ser-656 are enriched in basic and acidic residues. Phosphoserine is present on residues Ser-666, Ser-668, Ser-675, and Ser-717. 2 stretches are compositionally biased toward basic and acidic residues: residues Glu-722–Gln-754 and Ser-778–Glu-787. A Glycyl lysine isopeptide (Lys-Gly) (interchain with G-Cter in SUMO2) cross-link involves residue Lys-751. 2 positions are modified to phosphoserine: Ser-778 and Ser-790. Residues Ala-788–Glu-800 are compositionally biased toward acidic residues. Residue Thr-793 is modified to Phosphothreonine. Basic and acidic residues-rich tracts occupy residues Val-808–Leu-817, Gly-841–Leu-853, and Lys-997–Glu-1012. Residues Phe-1013–Asn-1023 show a composition bias toward polar residues. Ser-1016 is modified (phosphoserine). Thr-1028 carries the post-translational modification Phosphothreonine. Residues Glu-1030 to Val-1051 are compositionally biased toward low complexity. A Phosphoserine modification is found at Ser-1031. A compositionally biased stretch (basic and acidic residues) spans Glu-1058–Thr-1067. The span at Ser-1089–Ser-1103 shows a compositional bias: low complexity. Over residues Lys-1132–Lys-1150 the composition is skewed to basic residues. The residue at position 1152 (Thr-1152) is a Phosphothreonine. Phosphoserine occurs at positions 1154, 1155, 1157, and 1161. Positions Glu-1164–Ser-1186 are enriched in polar residues. Residues Arg-1198 to Ser-1210 are compositionally biased toward basic and acidic residues. Residues Glu-1227–Glu-1272 are a coiled coil. The segment covering Ala-1274–Ala-1290 has biased composition (low complexity).

In terms of assembly, component of a Sin3A corepressor complex consisting of SIN3A, SAP130, SUDS3/SAP45, SAP180, HDAC1 and HDAC2. Interacts with ARID4A. Interacts with AR. Expressed in Sertoli cells of the testis.

It localises to the nucleus. Acts as a transcriptional repressor. May function in the assembly and/or enzymatic activity of the Sin3A corepressor complex or in mediating interactions between the complex and other regulatory complexes. Plays a role in the regulation of epigenetic modifications at the PWS/AS imprinting center near the SNRPN promoter, where it might function as part of a complex with RB1 and ARID4A. Involved in spermatogenesis, together with ARID4A, where it functions as a transcriptional coactivator for AR (androgen receptor) and enhances expression of genes required for sperm maturation. Regulates expression of the tight junction protein CLDN3 in the testis, which is important for integrity of the blood-testis barrier. Plays a role in myeloid homeostasis where it regulates the histone methylation state of bone marrow cells and expression of various genes involved in hematopoiesis. May function as a leukemia suppressor. The polypeptide is AT-rich interactive domain-containing protein 4B (Arid4b) (Mus musculus (Mouse)).